A 1217-amino-acid polypeptide reads, in one-letter code: Endonuclease YhcR (1217 aa).

The N-terminal stretch at 1–46 is a signal peptide; the sequence is MLSVEMISRQNRCHYVYKGGNMMRRILHIVLITALMFLNVMYTFEA. The 142-residue stretch at 376–517 folds into the TNase-like domain; it reads GEYEGIVDRV…KKDQKGIWNE (142 aa). Catalysis depends on residues arginine 404, glutamate 412, and arginine 460. The interval 590 to 828 is phosphoesterase; it reads LRILSMNDLH…VIFAAHNHQV (239 aa). Residues aspartate 597, histidine 599, aspartate 647, asparagine 680, histidine 792, and histidine 824 each coordinate a divalent metal cation. The 5'-nucleotidase stretch occupies residues 829–1085; it reads VNGEVNGKLI…AYTKEGRIKL (257 aa). Substrate contacts are provided by residues phenylalanine 965 and 1035-1042; that span reads FMATATGA. Residues 1087 to 1142 form a disordered region; sequence EASDIEDPVTEDPITEEPGDDPGTEDPIKEDPRPGEDLPDIKETPGTAPVHQLPPS. The span at 1089–1110 shows a compositional bias: acidic residues; sequence SDIEDPVTEDPITEEPGDDPGT. Over residues 1112–1129 the composition is skewed to basic and acidic residues; that stretch reads DPIKEDPRPGEDLPDIKE. The short motif at 1182–1186 is the LPXTG sorting signal element; that stretch reads LPDTS. Position 1185 is a pentaglycyl murein peptidoglycan amidated threonine (threonine 1185). A propeptide spans 1186–1217 (removed by sortase); sequence SAGYYNFMVIGAAVTLSGTYLYVRRKRSASRT.

In the C-terminal section; belongs to the 5'-nucleotidase family. Ca(2+) is required as a cofactor. It depends on Mn(2+) as a cofactor.

Its subcellular location is the secreted. It is found in the cell wall. Requires a minimum of 0.1 mM of calcium for a significant activity. Maximal activity was observed with concentrations of calcium between 1 to 5 mM. Is 10-fold less active with the corresponding concentrations of manganese. Inhibited by NaCl at concentrations of 100 mM and higher. Its function is as follows. Sugar-nonspecific endonuclease that yields nucleotide 3'-monophosphate products. No 5'-nucleotidase activity was detected, using 5'-AMP as the substrate, in the presence of diverse divalent metals and with various pH values. The polypeptide is Endonuclease YhcR (yhcR) (Bacillus subtilis (strain 168)).